A 229-amino-acid polypeptide reads, in one-letter code: MAGKKYREAATKIERFRDYELAEAIEKVKEVTTTKFDATVDVAVKLGVDPRHADQVVRGTVMLPHGTGKTVSVLVICKETKAEEAKEAGADFVGFEEYITKIQEGWTGVDVIIATPDVMGQLGKVAKILGPRGLMPNPKSGTVTMDVAKAVKEVKAGKIEFRVDKAGNIHAPVGKVSFDSEHLNTNIVAFLKEVVRLKPSAAKGQYVQGIALSSTMSPSVKVKMDKFIS.

It belongs to the universal ribosomal protein uL1 family. Part of the 50S ribosomal subunit.

Binds directly to 23S rRNA. The L1 stalk is quite mobile in the ribosome, and is involved in E site tRNA release. In terms of biological role, protein L1 is also a translational repressor protein, it controls the translation of the L11 operon by binding to its mRNA. The polypeptide is Large ribosomal subunit protein uL1 (Chlorobium chlorochromatii (strain CaD3)).